A 127-amino-acid polypeptide reads, in one-letter code: Aspartate 1-decarboxylase (127 aa).

The active-site Schiff-base intermediate with substrate; via pyruvic acid is the Ser25. Ser25 is modified (pyruvic acid (Ser)). Thr57 is a substrate binding site. The active-site Proton donor is the Tyr58. 73–75 (GAA) is a substrate binding site.

Belongs to the PanD family. In terms of assembly, heterooctamer of four alpha and four beta subunits. It depends on pyruvate as a cofactor. In terms of processing, is synthesized initially as an inactive proenzyme, which is activated by self-cleavage at a specific serine bond to produce a beta-subunit with a hydroxyl group at its C-terminus and an alpha-subunit with a pyruvoyl group at its N-terminus.

The protein localises to the cytoplasm. The enzyme catalyses L-aspartate + H(+) = beta-alanine + CO2. It participates in cofactor biosynthesis; (R)-pantothenate biosynthesis; beta-alanine from L-aspartate: step 1/1. In terms of biological role, catalyzes the pyruvoyl-dependent decarboxylation of aspartate to produce beta-alanine. The protein is Aspartate 1-decarboxylase of Geobacillus sp. (strain WCH70).